The primary structure comprises 779 residues: Nucleolar complex protein 3 homolog (779 aa).

2 disordered regions span residues 1-20 (MGFASASREEKLKMMKTNKT) and 100-189 (NAKR…SHLS). A compositionally biased stretch (acidic residues) spans 114–124 (DSDEDEDEDDV). The span at 136-160 (EEGHEELLPIKLKDGTLIRPTREKE) shows a compositional bias: basic and acidic residues. Residues 161 to 178 (VEEQEEEEKSDIDEGEED) show a composition bias toward acidic residues. The stretch at 434 to 474 (AKKYQIKKERASKTAKKYKKQLARLEADLLEVEAEESLTKK) forms a coiled coil.

The protein belongs to the CBF/MAK21 family.

Its subcellular location is the nucleus. The protein resides in the nucleolus. This is Nucleolar complex protein 3 homolog from Caenorhabditis briggsae.